A 395-amino-acid chain; its full sequence is S-adenosylmethionine synthase (395 aa).

ATP is bound at residue His16. Asp18 is a Mg(2+) binding site. Glu44 contributes to the K(+) binding site. Glu57 and Gln100 together coordinate L-methionine. Positions 100 to 110 are flexible loop; sequence QSPDIAQGVDR. Residues 167–169, 233–234, Asp242, 248–249, Ala265, and Lys269 each bind ATP; these read DAK, RF, and RK. Residue Asp242 coordinates L-methionine. Lys273 contacts L-methionine.

The protein belongs to the AdoMet synthase family. Homotetramer; dimer of dimers. Requires Mg(2+) as cofactor. K(+) is required as a cofactor.

The protein resides in the cytoplasm. The catalysed reaction is L-methionine + ATP + H2O = S-adenosyl-L-methionine + phosphate + diphosphate. Its pathway is amino-acid biosynthesis; S-adenosyl-L-methionine biosynthesis; S-adenosyl-L-methionine from L-methionine: step 1/1. Functionally, catalyzes the formation of S-adenosylmethionine (AdoMet) from methionine and ATP. The overall synthetic reaction is composed of two sequential steps, AdoMet formation and the subsequent tripolyphosphate hydrolysis which occurs prior to release of AdoMet from the enzyme. This Burkholderia cenocepacia (strain ATCC BAA-245 / DSM 16553 / LMG 16656 / NCTC 13227 / J2315 / CF5610) (Burkholderia cepacia (strain J2315)) protein is S-adenosylmethionine synthase.